Consider the following 493-residue polypeptide: uncharacterized protein (493 aa).

Ser-328 carries the post-translational modification Phosphoserine. Positions 466–486 are enriched in polar residues; it reads AESNSGRGQNSKTKTTSVNLS. Residues 466-493 form a disordered region; it reads AESNSGRGQNSKTKTTSVNLSRNKRTRT.

This is an uncharacterized protein from Schizosaccharomyces pombe (strain 972 / ATCC 24843) (Fission yeast).